Reading from the N-terminus, the 230-residue chain is Heptaprenylglyceryl phosphate synthase (230 aa).

Residue lysine 12 coordinates sn-glycerol 1-phosphate. Mg(2+)-binding residues include aspartate 14 and threonine 40. Sn-glycerol 1-phosphate contacts are provided by residues 159–164, glycine 189, and 209–210; these read YIEYSG and GD.

This sequence belongs to the GGGP/HepGP synthase family. Group I subfamily. In terms of assembly, homodimer. Mg(2+) serves as cofactor.

The enzyme catalyses sn-glycerol 1-phosphate + all-trans-heptaprenyl diphosphate = 3-heptaprenyl-sn-glycero-1-phosphate + diphosphate. It participates in membrane lipid metabolism; glycerophospholipid metabolism. Prenyltransferase that catalyzes in vivo the transfer of the heptaprenyl moiety of heptaprenyl pyrophosphate (HepPP; 35 carbon atoms) to the C3 hydroxyl of sn-glycerol-1-phosphate (G1P), producing heptaprenylglyceryl phosphate (HepGP). This reaction is an ether-bond-formation step in the biosynthesis of archaea-type G1P-based membrane lipids found in Bacillales. The chain is Heptaprenylglyceryl phosphate synthase from Staphylococcus aureus (strain MRSA252).